The following is a 512-amino-acid chain: Cytochrome P450 monooxygenase gliC (512 aa).

Residues 1-19 (MAFTLTILVPCMVLALVAA) form the signal peptide. Asn118, Asn421, and Asn434 each carry an N-linked (GlcNAc...) asparagine glycan. Cys452 is a binding site for heme.

This sequence belongs to the cytochrome P450 family. It depends on heme as a cofactor.

The protein operates within mycotoxin biosynthesis. In terms of biological role, cytochrome P450 monooxygenase; part of the gene cluster that mediates the biosynthesis of gliotoxin, a member of the epipolythiodioxopiperazine (ETP) class of toxins characterized by a disulfide bridged cyclic dipeptide. The first step in gliotoxin biosynthesis is the condensation of serine and phenylalanine to form the cyclo-L-phenylalanyl-L-serine diketopiperazine (DKP) by the NRPS gliP. GliP is also able to produce the DKP cyclo-L-tryptophanyl-L-serine, suggesting that the substrate specificity of the first adenylation (A) domain in gliP is sufficiently relaxed to accommodate both L-Phe and L-Trp. The cytochrome P450 monooxygenase gliC has been shown to catalyze the subsequent hydroxylation of the alpha-carbon of L-Phe in cyclo-L-phenylalanyl-L-serine whereas the second cytochrome P450 enzyme, gliF, is presumably involved in the modification of the DKP side chain. The glutathione S-transferase (GST) gliG then forms a bis-glutathionylated biosynthetic intermediate which is responsible for the sulfurization of gliotoxin. This bis-glutathionylated intermediate is subsequently processed by the gamma-glutamyl cyclotransferase gliK to remove both gamma-glutamyl moieties. Subsequent processing via gliI yields a biosynthetic intermediate, which is N-methylated via the N-methyltransferase gliN, before the gliotoxin oxidoreductase gliT-mediated disulfide bridge closure. GliN-mediated amide methylation confers stability to ETP, damping the spontaneous formation of tri- and tetrasulfides. Intracellular dithiol gliotoxin oxidized by gliT is subsequently effluxed by gliA. Gliotoxin contributes to pathogenesis during invasive aspergillosis. In macrophages and neutrophils, gliotoxin showed inhibition of various different cell functions including cytokine production, antigen presentation, phagocytosis, and production of reactive oxygen species. This chain is Cytochrome P450 monooxygenase gliC, found in Aspergillus fumigatus (strain ATCC MYA-4609 / CBS 101355 / FGSC A1100 / Af293) (Neosartorya fumigata).